Reading from the N-terminus, the 243-residue chain is Small ribosomal subunit protein uS3 (243 aa).

The 72-residue stretch at 39–110 (IRTFIQKKYG…QVRINVVEVE (72 aa)) folds into the KH type-2 domain. A disordered region spans residues 216-243 (QTIPVGASPKRKASRRPQQFEDRSNENS). Residues 233-243 (QQFEDRSNENS) show a composition bias toward basic and acidic residues.

This sequence belongs to the universal ribosomal protein uS3 family. Part of the 30S ribosomal subunit. Forms a tight complex with proteins S10 and S14.

Binds the lower part of the 30S subunit head. Binds mRNA in the 70S ribosome, positioning it for translation. This chain is Small ribosomal subunit protein uS3, found in Prochlorococcus marinus (strain AS9601).